The primary structure comprises 774 residues: 5-methyltetrahydropteroyltriglutamate--homocysteine methyltransferase (774 aa).

5-methyltetrahydropteroyltri-L-glutamate-binding positions include 23–26 (RELK) and Lys-123. Residues 446 to 448 (IGS) and Glu-499 contribute to the L-homocysteine site. L-methionine-binding positions include 446–448 (IGS) and Glu-499. Residues 530 to 531 (RC) and Trp-576 each bind 5-methyltetrahydropteroyltri-L-glutamate. Residue Asp-614 participates in L-homocysteine binding. An L-methionine-binding site is contributed by Asp-614. Glu-620 provides a ligand contact to 5-methyltetrahydropteroyltri-L-glutamate. The Zn(2+) site is built by His-656, Cys-658, and Glu-680. The active-site Proton donor is His-709. Zn(2+) is bound at residue Cys-741.

The protein belongs to the vitamin-B12 independent methionine synthase family. The cofactor is Zn(2+).

It catalyses the reaction 5-methyltetrahydropteroyltri-L-glutamate + L-homocysteine = tetrahydropteroyltri-L-glutamate + L-methionine. It functions in the pathway amino-acid biosynthesis; L-methionine biosynthesis via de novo pathway; L-methionine from L-homocysteine (MetE route): step 1/1. In terms of biological role, catalyzes the transfer of a methyl group from 5-methyltetrahydrofolate to homocysteine resulting in methionine formation. This chain is 5-methyltetrahydropteroyltriglutamate--homocysteine methyltransferase, found in Aliivibrio fischeri (strain MJ11) (Vibrio fischeri).